A 156-amino-acid chain; its full sequence is Small ribosomal subunit protein uS7 (156 aa).

Belongs to the universal ribosomal protein uS7 family. In terms of assembly, part of the 30S ribosomal subunit. Contacts proteins S9 and S11.

Its function is as follows. One of the primary rRNA binding proteins, it binds directly to 16S rRNA where it nucleates assembly of the head domain of the 30S subunit. Is located at the subunit interface close to the decoding center, probably blocks exit of the E-site tRNA. The protein is Small ribosomal subunit protein uS7 of Leuconostoc mesenteroides subsp. mesenteroides (strain ATCC 8293 / DSM 20343 / BCRC 11652 / CCM 1803 / JCM 6124 / NCDO 523 / NBRC 100496 / NCIMB 8023 / NCTC 12954 / NRRL B-1118 / 37Y).